The primary structure comprises 399 residues: Argininosuccinate synthase (399 aa).

8–16 contributes to the ATP binding site; the sequence is AYSGGLDTS. L-citrulline is bound at residue Y87. G117 is a binding site for ATP. T119, N123, and D124 together coordinate L-aspartate. N123 is a binding site for L-citrulline. L-citrulline contacts are provided by R127, S175, E259, and Y271.

The protein belongs to the argininosuccinate synthase family. Type 1 subfamily. As to quaternary structure, homotetramer.

It localises to the cytoplasm. The catalysed reaction is L-citrulline + L-aspartate + ATP = 2-(N(omega)-L-arginino)succinate + AMP + diphosphate + H(+). The protein operates within amino-acid biosynthesis; L-arginine biosynthesis; L-arginine from L-ornithine and carbamoyl phosphate: step 2/3. The protein is Argininosuccinate synthase of Corynebacterium diphtheriae (strain ATCC 700971 / NCTC 13129 / Biotype gravis).